Reading from the N-terminus, the 87-residue chain is Phosphoribosyl-ATP pyrophosphatase (87 aa).

Belongs to the PRA-PH family.

Its subcellular location is the cytoplasm. The enzyme catalyses 1-(5-phospho-beta-D-ribosyl)-ATP + H2O = 1-(5-phospho-beta-D-ribosyl)-5'-AMP + diphosphate + H(+). Its pathway is amino-acid biosynthesis; L-histidine biosynthesis; L-histidine from 5-phospho-alpha-D-ribose 1-diphosphate: step 2/9. In Beutenbergia cavernae (strain ATCC BAA-8 / DSM 12333 / CCUG 43141 / JCM 11478 / NBRC 16432 / NCIMB 13614 / HKI 0122), this protein is Phosphoribosyl-ATP pyrophosphatase.